Reading from the N-terminus, the 981-residue chain is Ubiquitin carboxyl-terminal hydrolase 15 (981 aa).

At A2 the chain carries N-acetylalanine. Residues 2 to 223 (AEGGAADLDT…KNEDGTWPRG (222 aa)) are mediates interaction with SART3. The DUSP domain maps to 7-118 (ADLDTQRSDI…GQEPIARKVV (112 aa)). The disordered stretch occupies residues 216–237 (EDGTWPRGPSTPKSPGASNFST). A Phosphothreonine modification is found at T226. A compositionally biased stretch (polar residues) spans 226 to 237 (TPKSPGASNFST). 2 positions are modified to phosphoserine: S229 and S242. The region spanning 289–933 (CGLSNLGNTC…AAYVLFYQRQ (645 aa)) is the USP domain. The Nucleophile role is filled by C298. T602 carries the post-translational modification Phosphothreonine. The tract at residues 633–694 (CCEDQNINGN…GGDNDSENGL (62 aa)) is disordered. Acidic residues predominate over residues 656 to 673 (METDEPDDESSQDQELPS). Residue H891 is the Proton acceptor of the active site. The disordered stretch occupies residues 952 to 981 (SAATGIPLESDEDSNDNDNDLENENCMHTN). Positions 960–974 (ESDEDSNDNDNDLEN) are enriched in acidic residues. A phosphoserine mark is found at S961 and S965.

It belongs to the peptidase C19 family. A homodimer structure has been reported; however it is unclear whether the protein form a homodimer in vivo. Identified in a complex with the COP9 signalosome complex (CSN). Interacts with SMAD1, SMAD2 and SMAD3; the interaction is direct. Forms a complex with SMURF2 and SMAD7. Interacts with TGFBR1. Interacts with SART3; the interaction is direct. May interact with RNF20 and RNF40. May interact with PRKN. Interacts with INCA1. In terms of processing, phosphorylated. Phosphorylation protects against ubiquitination and subsequent degradation by the proteasome. Ubiquitinated, leading to degradation by the proteasome. Widely expressed with highest levels in the brain and spleen, and lowest levels in the muscles (at protein level). In the midbrain, strong expression in neurons including the dopaminergic neurons (at protein level). Widely expressed with highest levels in testis, heart and liver.

It is found in the cytoplasm. Its subcellular location is the nucleus. The protein localises to the mitochondrion. The catalysed reaction is Thiol-dependent hydrolysis of ester, thioester, amide, peptide and isopeptide bonds formed by the C-terminal Gly of ubiquitin (a 76-residue protein attached to proteins as an intracellular targeting signal).. In terms of biological role, hydrolase that removes conjugated ubiquitin from target proteins and regulates various pathways such as the TGF-beta receptor signaling, NF-kappa-B and RNF41/NRDP1-PRKN pathways. Acts as a key regulator of TGF-beta receptor signaling pathway, but the precise mechanism is still unclear: according to a report, acts by promoting deubiquitination of monoubiquitinated R-SMADs (SMAD1, SMAD2 and/or SMAD3), thereby alleviating inhibition of R-SMADs and promoting activation of TGF-beta target genes. According to another reports, regulates the TGF-beta receptor signaling pathway by mediating deubiquitination and stabilization of TGFBR1, leading to an enhanced TGF-beta signal. Able to mediate deubiquitination of monoubiquitinated substrates, 'Lys-27'-, 'Lys-48'- and 'Lys-63'-linked polyubiquitin chains. May also regulate gene expression and/or DNA repair through the deubiquitination of histone H2B. Acts as an inhibitor of mitophagy by counteracting the action of parkin (PRKN): hydrolyzes cleavage of 'Lys-48'- and 'Lys-63'-linked polyubiquitin chains attached by parkin on target proteins such as MFN2, thereby reducing parkin's ability to drive mitophagy. Acts as an associated component of COP9 signalosome complex (CSN) and regulates different pathways via this association: regulates NF-kappa-B by mediating deubiquitination of NFKBIA and deubiquitinates substrates bound to VCP. Involved in endosome organization by mediating deubiquitination of SQSTM1: ubiquitinated SQSTM1 forms a molecular bridge that restrains cognate vesicles in the perinuclear region and its deubiquitination releases target vesicles for fast transport into the cell periphery. Acts as a negative regulator of antifungal immunity by mediating 'Lys-27'-linked deubiquitination of CARD9, thereby inactivating CARD9. The polypeptide is Ubiquitin carboxyl-terminal hydrolase 15 (Usp15) (Mus musculus (Mouse)).